The chain runs to 173 residues: Co-chaperone protein HscB homolog (173 aa).

The J domain maps to 5–77 (CHFALFDLQP…SQRARYLLAL (73 aa)).

This sequence belongs to the HscB family. Interacts with HscA and stimulates its ATPase activity.

In terms of biological role, co-chaperone involved in the maturation of iron-sulfur cluster-containing proteins. Seems to help targeting proteins to be folded toward HscA. The sequence is that of Co-chaperone protein HscB homolog from Ectopseudomonas mendocina (strain ymp) (Pseudomonas mendocina).